The following is a 134-amino-acid chain: MGLIVYYSSRSENTHRFVARLGLRAARIPAGGADAFHIREPFVLVVPTYSDGDGKGAVPKQVIRFLNDAENRGHIRGVIAAGNSNFGETYGLAGDVISQKCRVPYLYRFELIGTEEDVANVKHGMERFWTREQL.

Belongs to the NrdI family.

In terms of biological role, probably involved in ribonucleotide reductase function. The chain is Protein NrdI from Rhizobium leguminosarum bv. trifolii (strain WSM2304).